Here is a 189-residue protein sequence, read N- to C-terminus: Putative manganese efflux pump MntP (189 aa).

Transmembrane regions (helical) follow at residues 2-22 (SLTE…AVSI), 36-56 (ILQM…IGYY), 71-91 (WIAF…SITA), 106-126 (LLLV…VSLS), 132-152 (ILYS…AAIL), and 167-187 (IVGG…HMFF).

This sequence belongs to the MntP (TC 9.B.29) family.

The protein localises to the cell membrane. In terms of biological role, probably functions as a manganese efflux pump. This is Putative manganese efflux pump MntP from Ruminiclostridium cellulolyticum (strain ATCC 35319 / DSM 5812 / JCM 6584 / H10) (Clostridium cellulolyticum).